Here is a 527-residue protein sequence, read N- to C-terminus: MSLELNTIKVNPTGWGPVGKLEKFTDIPYAPFSKGDKIGKCSDWNSNVRNYQRQNYGSNAFNPFTFKLEDDEDSFTLVDYTRVQNKLKNKGKTYQKQFYQQNKRGGSNAGGRGGRGGMRGGRFGSNNKYWNDRRQRNRESSIEILSSWESKEEFDLSTFKQYTVEQLPEPETIGTYGQVKYYNKVYDRINAKNEKKLQKTENSVPLIPTSDDKVIRSEYMNGNVYATDSILAVLMSAQKSVYSWDIVVQKVGARLFFELRPGTSEHLTVNENLTAHHQDDKDPINTTSSLSQEATQVNLNYWQQVLSQNVEPFKFDNELPEGDEFENCVDVGYAYKKWDLGDDIVVLARTEIDGVVEGLPGQPPKFISIKAINEHDSNRFGIEFRKKLDSQRAAILATEIKNNSTKFAKWSIQSTLAGCEMLNLGFVSRDSIRDNNNHVILGTQFYPVADLNKQNGVDMKNCWGILKHIAQTCMKLANGKYLLHRDPNRNVINLYSVPENAFDQIEEETQEEEEEEQSKGWVEESRE.

Residues 100–136 (QQNKRGGSNAGGRGGRGGMRGGRFGSNNKYWNDRRQR) form a disordered region. Positions 107 to 123 (SNAGGRGGRGGMRGGRF) are enriched in gly residues. Residues 264 to 277 (SEHLTVNENLTAHH) form an RNA gate region. A disordered region spans residues 503 to 527 (DQIEEETQEEEEEEQSKGWVEESRE). Over residues 504-516 (QIEEETQEEEEEE) the composition is skewed to acidic residues. Residues 517 to 527 (QSKGWVEESRE) show a composition bias toward basic and acidic residues.

The protein belongs to the eIF-3 subunit D family. Component of the eukaryotic translation initiation factor 3 (eIF-3) complex.

It localises to the cytoplasm. Its function is as follows. mRNA cap-binding component of the eukaryotic translation initiation factor 3 (eIF-3) complex, which is involved in protein synthesis of a specialized repertoire of mRNAs and, together with other initiation factors, stimulates binding of mRNA and methionyl-tRNAi to the 40S ribosome. The eIF-3 complex specifically targets and initiates translation of a subset of mRNAs involved in cell proliferation. In the eIF-3 complex, eif3d specifically recognizes and binds the 7-methylguanosine cap of a subset of mRNAs. In Dictyostelium discoideum (Social amoeba), this protein is Eukaryotic translation initiation factor 3 subunit D (eif3d).